Here is a 140-residue protein sequence, read N- to C-terminus: Ig heavy chain V region 93G7 (140 aa).

The first 19 residues, 1–19, serve as a signal peptide directing secretion; sequence MGWSFIFLFLLSVTAGVHS. The Ig-like domain maps to 20 to 139; the sequence is EVQLQQSGAE…WGQGTPLTVS (120 aa).

The sequence is that of Ig heavy chain V region 93G7 from Mus musculus (Mouse).